We begin with the raw amino-acid sequence, 338 residues long: Putative peptide import ATP-binding protein BOV_A0348 (338 aa).

The 254-residue stretch at 10-263 (KGLRTVFRTR…PRHPYTMGLL (254 aa)) folds into the ABC transporter domain. 43–50 (GESGSGKS) provides a ligand contact to ATP.

This sequence belongs to the ABC transporter superfamily. As to quaternary structure, the complex is composed of two ATP-binding proteins (BOV_A0347 and BOV_A0348), two transmembrane proteins (BOV_A0350 and BOV_A0351) and a solute-binding protein (BOV_A0352).

The protein resides in the cell inner membrane. Its function is as follows. Probably part of an ABC transporter complex that could be involved in peptide import. Probably responsible for energy coupling to the transport system. The sequence is that of Putative peptide import ATP-binding protein BOV_A0348 from Brucella ovis (strain ATCC 25840 / 63/290 / NCTC 10512).